We begin with the raw amino-acid sequence, 997 residues long: uncharacterized protein (997 aa).

The protein belongs to the MG414/MG415 family.

This is an uncharacterized protein from Mycoplasma pneumoniae (strain ATCC 29342 / M129 / Subtype 1) (Mycoplasmoides pneumoniae).